A 94-amino-acid polypeptide reads, in one-letter code: Co-chaperonin GroES (94 aa).

It belongs to the GroES chaperonin family. As to quaternary structure, heptamer of 7 subunits arranged in a ring. Interacts with the chaperonin GroEL.

It localises to the cytoplasm. Functionally, together with the chaperonin GroEL, plays an essential role in assisting protein folding. The GroEL-GroES system forms a nano-cage that allows encapsulation of the non-native substrate proteins and provides a physical environment optimized to promote and accelerate protein folding. GroES binds to the apical surface of the GroEL ring, thereby capping the opening of the GroEL channel. This Lactococcus lactis subsp. lactis (strain IL1403) (Streptococcus lactis) protein is Co-chaperonin GroES.